Consider the following 513-residue polypeptide: Cytochrome P450 monooxygenase orf3 (513 aa).

The helical transmembrane segment at leucine 11–tyrosine 31 threads the bilayer. N-linked (GlcNAc...) asparagine glycosylation is found at asparagine 211 and asparagine 351. Cysteine 455 lines the heme pocket.

Belongs to the cytochrome P450 family. Heme is required as a cofactor.

It is found in the membrane. Its pathway is mycotoxin biosynthesis. In terms of biological role, cytochrome P450 monooxygenase; part of the gene cluster that mediates the biosynthesis of brefeldin A (BFA), a protein transport inhibitor that shows antiviral, antifungal, and antitumor properties. The proposed biosynthesis of BFA involves formation of an acyclic polyketide chain that is differentially tailored throughout the backbone. The highly reducing polyketide synthase Bref-PKS is proposed to synthesize the precisely reduced octaketide precursor, which could then be directly offloaded by the thiohydrolase enzyme Bref-TH followed by a cytochrome P450 monooxygenase-mediated formation of the cyclopentane ring and macrocyclization to afford 7-deoxy BFA. Alternatively, the first ring annulation can also occur on the ACP-tethered intermediate before the thiohydrolase release and lactonization. The C7-hydroxylation by another cytochrome P450 monooxygenase is believed to be the final step in the process to obtain the final structure of BFA. In addition to the HRPKS Bref-PKS and the thiohydrolase Bref-TH, the brefeldin A biosynthesis cluster contains 4 cytochrome p450 monooxygenases (called orf3 to orf6), as well a the probable cluster-specific transcription regulator orf8. In Eupenicillium brefeldianum (Penicillium brefeldianum), this protein is Cytochrome P450 monooxygenase orf3.